Reading from the N-terminus, the 297-residue chain is PAK4-inhibitor INKA2 (297 aa).

3 disordered regions span residues 82-109 (GRGPARPTVCSPSSQPSLGSSTKFPSHR), 175-200 (LEKGGEKGETGGAREPKGEKGQPQEL), and 234-285 (TPMV…LEHS). The segment covering 92–102 (SPSSQPSLGSS) has biased composition (low complexity). Residues 137 to 180 (EPDDWTSTLMSRGRNRQPLVLGDNVFADLVGNWLDLPELEKGGE) form an inka box region. Residues 244–253 (RSQKVKKRSL) show a composition bias toward basic residues.

This sequence belongs to the INKA family. In terms of assembly, interacts with PAK4.

It is found in the nucleus. Functionally, inhibitor of the serine/threonine-protein kinase PAK4. Acts by binding PAK4 in a substrate-like manner, inhibiting the protein kinase activity. The chain is PAK4-inhibitor INKA2 from Homo sapiens (Human).